The sequence spans 382 residues: Alkanesulfonate monooxygenase (382 aa).

Belongs to the SsuD family.

It carries out the reaction an alkanesulfonate + FMNH2 + O2 = an aldehyde + FMN + sulfite + H2O + 2 H(+). Its function is as follows. Catalyzes the desulfonation of aliphatic sulfonates. The chain is Alkanesulfonate monooxygenase from Pseudomonas entomophila (strain L48).